A 184-amino-acid polypeptide reads, in one-letter code: NADH-quinone oxidoreductase subunit B (184 aa).

Positions 37, 38, 103, and 132 each coordinate [4Fe-4S] cluster.

Belongs to the complex I 20 kDa subunit family. As to quaternary structure, NDH-1 is composed of 14 different subunits. Subunits NuoB, C, D, E, F, and G constitute the peripheral sector of the complex. [4Fe-4S] cluster is required as a cofactor.

It localises to the cell membrane. It carries out the reaction a quinone + NADH + 5 H(+)(in) = a quinol + NAD(+) + 4 H(+)(out). Its function is as follows. NDH-1 shuttles electrons from NADH, via FMN and iron-sulfur (Fe-S) centers, to quinones in the respiratory chain. The immediate electron acceptor for the enzyme in this species is believed to be a menaquinone. Couples the redox reaction to proton translocation (for every two electrons transferred, four hydrogen ions are translocated across the cytoplasmic membrane), and thus conserves the redox energy in a proton gradient. This chain is NADH-quinone oxidoreductase subunit B, found in Beutenbergia cavernae (strain ATCC BAA-8 / DSM 12333 / CCUG 43141 / JCM 11478 / NBRC 16432 / NCIMB 13614 / HKI 0122).